A 179-amino-acid chain; its full sequence is Large ribosomal subunit protein uL6c (179 aa).

The protein belongs to the universal ribosomal protein uL6 family. In terms of assembly, part of the 50S ribosomal subunit.

The protein localises to the plastid. It is found in the chloroplast. Functionally, binds 23S rRNA. This chain is Large ribosomal subunit protein uL6c (rpl6), found in Guillardia theta (Cryptophyte).